Consider the following 348-residue polypeptide: S-adenosylmethionine:tRNA ribosyltransferase-isomerase (348 aa).

This sequence belongs to the QueA family. As to quaternary structure, monomer.

It is found in the cytoplasm. The enzyme catalyses 7-aminomethyl-7-carbaguanosine(34) in tRNA + S-adenosyl-L-methionine = epoxyqueuosine(34) in tRNA + adenine + L-methionine + 2 H(+). It functions in the pathway tRNA modification; tRNA-queuosine biosynthesis. Its function is as follows. Transfers and isomerizes the ribose moiety from AdoMet to the 7-aminomethyl group of 7-deazaguanine (preQ1-tRNA) to give epoxyqueuosine (oQ-tRNA). The polypeptide is S-adenosylmethionine:tRNA ribosyltransferase-isomerase (Amoebophilus asiaticus (strain 5a2)).